We begin with the raw amino-acid sequence, 600 residues long: NADH-quinone oxidoreductase subunit C/D (600 aa).

The segment at 1 to 190 is NADH dehydrogenase I subunit C; sequence MVNNMTDLTA…DPFELTKAKQ (190 aa). Positions 214–600 are NADH dehydrogenase I subunit D; it reads DFMFLNLGPN…IDFVMSDVDR (387 aa).

In the N-terminal section; belongs to the complex I 30 kDa subunit family. It in the C-terminal section; belongs to the complex I 49 kDa subunit family. In terms of assembly, NDH-1 is composed of 13 different subunits. Subunits NuoB, CD, E, F, and G constitute the peripheral sector of the complex.

Its subcellular location is the cell inner membrane. It carries out the reaction a quinone + NADH + 5 H(+)(in) = a quinol + NAD(+) + 4 H(+)(out). In terms of biological role, NDH-1 shuttles electrons from NADH, via FMN and iron-sulfur (Fe-S) centers, to quinones in the respiratory chain. The immediate electron acceptor for the enzyme in this species is believed to be ubiquinone. Couples the redox reaction to proton translocation (for every two electrons transferred, four hydrogen ions are translocated across the cytoplasmic membrane), and thus conserves the redox energy in a proton gradient. The protein is NADH-quinone oxidoreductase subunit C/D of Salmonella arizonae (strain ATCC BAA-731 / CDC346-86 / RSK2980).